A 420-amino-acid chain; its full sequence is MVCSSFIRSFIVQAGCRIGVLAQGRHQFIHIKKTLSVGFGFRTSVIGFRTTSGIGFRTSAKMMVDTSAGEKRISLVDMPPEKVDDGGYIGGGWKNDDGSLSCGYCSFRGKRSTMEDFYDIKASTIEGQAVCMFGIFDGHGGSRAAEYLKEHLFNNLMKHPQFLTDTKLALNETYKQTDVAFLESEKDTYRDDGSTASAAVLVGNHLYVANVGDSRTIVSKAGKAIALSDDHKPNRSDERKRIESAGGVIMWAGTWRVGGVLAMSRAFGNRMLKQFVVAEPEIQDLEIDHEAELLVLASDGLWDVVPNEDAVALAQSEEEPEAAARKLTDTAFSRGSADNITCIVVKFRHDKTESPKIETNAMAESEPELNPTTELEPESNPSTALETESIPKAELESEPDAIPDPKPETEPETKGEKAGE.

A PPM-type phosphatase domain is found at 101–347; that stretch reads SCGYCSFRGK…DNITCIVVKF (247 aa). Asp137, Gly138, Asp299, and Asp338 together coordinate Mn(2+). Residues 353 to 420 form a disordered region; it reads ESPKIETNAM…PETKGEKAGE (68 aa). Residues 403 to 420 are compositionally biased toward basic and acidic residues; sequence PDPKPETEPETKGEKAGE.

This sequence belongs to the PP2C family. It depends on Mg(2+) as a cofactor. Mn(2+) is required as a cofactor.

The catalysed reaction is O-phospho-L-seryl-[protein] + H2O = L-seryl-[protein] + phosphate. The enzyme catalyses O-phospho-L-threonyl-[protein] + H2O = L-threonyl-[protein] + phosphate. In Arabidopsis thaliana (Mouse-ear cress), this protein is Probable protein phosphatase 2C 76.